A 103-amino-acid chain; its full sequence is Photosystem II 5 kDa protein, chloroplastic (103 aa).

Residues 1–75 constitute a chloroplast transit peptide; sequence MASMTMTATF…LAKVAMAEEE (75 aa).

In terms of processing, the maturation of the PSII-T precursor to its final form occurs through a two step process. First, a stromal intermediate is formed, which, upon translocation into the thylakoid membrane, is processed to the mature protein.

Its subcellular location is the plastid. The protein localises to the chloroplast thylakoid membrane. Its function is as follows. May be a component of the oxygen-evolving complex. This Arabidopsis thaliana (Mouse-ear cress) protein is Photosystem II 5 kDa protein, chloroplastic (PSBT).